Here is a 278-residue protein sequence, read N- to C-terminus: Embryonic polyadenylate-binding protein 2 (278 aa).

2 disordered regions span residues 21–66 and 101–128; these read VSSD…GDAG and EGTPRPPGVQQQAEEEEGTAAGQLLSPE. Positions 35-50 are enriched in basic and acidic residues; the sequence is ETKEILGPEGGEGKEE. Residues 51–63 are compositionally biased toward acidic residues; it reads KEEEEDAEEDQDG. The 78-residue stretch at 147-224 folds into the RRM domain; that stretch reads RSVYVGNVDY…RVIKVLPKRT (78 aa). Residues 227-278 form a disordered region; that stretch reads PGISSTDRGGLRGHPGSRGAPFPHSGLQGRPRLRPQGQNRARGKFSPWFSPY.

Expressed in various adult tissues.

It localises to the cytoplasm. In terms of biological role, binds the poly(A) tail of mRNA. The polypeptide is Embryonic polyadenylate-binding protein 2 (PABPN1L) (Homo sapiens (Human)).